Consider the following 196-residue polypeptide: Hypoxanthine/guanine phosphoribosyltransferase (196 aa).

This sequence belongs to the purine/pyrimidine phosphoribosyltransferase family. Archaeal HPRT subfamily. Homodimer.

It localises to the cytoplasm. The enzyme catalyses IMP + diphosphate = hypoxanthine + 5-phospho-alpha-D-ribose 1-diphosphate. It catalyses the reaction GMP + diphosphate = guanine + 5-phospho-alpha-D-ribose 1-diphosphate. It functions in the pathway purine metabolism; IMP biosynthesis via salvage pathway; IMP from hypoxanthine: step 1/1. In terms of biological role, catalyzes a salvage reaction resulting in the formation of IMP that is energically less costly than de novo synthesis. In Methanocaldococcus sp. (strain FS406-22), this protein is Hypoxanthine/guanine phosphoribosyltransferase.